A 673-amino-acid polypeptide reads, in one-letter code: UvrABC system protein B (673 aa).

Positions 29–188 (EGLNDGLAHQ…LAELQYTRND (160 aa)) constitute a Helicase ATP-binding domain. ATP is bound at residue 42–49 (GVTGSGKT). The short motif at 95–118 (YYDYYQPEAYVPSSDTFIEKDASI) is the Beta-hairpin element. In terms of domain architecture, Helicase C-terminal spans 434–600 (QVDDVLSEIH…ALNKKVGELL (167 aa)). A disordered region spans residues 607-632 (KPKRGKQAVKVEEKSANTYKPKSRKE). Residues 634–669 (EKELKQLEQQMRDFAKDLEFEKAAAVRDKIGQLKAV) form the UVR domain.

This sequence belongs to the UvrB family. Forms a heterotetramer with UvrA during the search for lesions. Interacts with UvrC in an incision complex.

It localises to the cytoplasm. In terms of biological role, the UvrABC repair system catalyzes the recognition and processing of DNA lesions. A damage recognition complex composed of 2 UvrA and 2 UvrB subunits scans DNA for abnormalities. Upon binding of the UvrA(2)B(2) complex to a putative damaged site, the DNA wraps around one UvrB monomer. DNA wrap is dependent on ATP binding by UvrB and probably causes local melting of the DNA helix, facilitating insertion of UvrB beta-hairpin between the DNA strands. Then UvrB probes one DNA strand for the presence of a lesion. If a lesion is found the UvrA subunits dissociate and the UvrB-DNA preincision complex is formed. This complex is subsequently bound by UvrC and the second UvrB is released. If no lesion is found, the DNA wraps around the other UvrB subunit that will check the other stand for damage. The protein is UvrABC system protein B of Actinobacillus pleuropneumoniae serotype 5b (strain L20).